The primary structure comprises 314 residues: DNA-directed RNA polymerase subunit alpha (314 aa).

The alpha N-terminal domain (alpha-NTD) stretch occupies residues 1–228 (MIEIEKPKIE…EHLNIFVGLT (228 aa)). The segment at 246-314 (EKVLEMTIEE…ELGLGLRKDD (69 aa)) is alpha C-terminal domain (alpha-CTD).

Belongs to the RNA polymerase alpha chain family. In terms of assembly, homodimer. The RNAP catalytic core consists of 2 alpha, 1 beta, 1 beta' and 1 omega subunit. When a sigma factor is associated with the core the holoenzyme is formed, which can initiate transcription.

It catalyses the reaction RNA(n) + a ribonucleoside 5'-triphosphate = RNA(n+1) + diphosphate. Its function is as follows. DNA-dependent RNA polymerase catalyzes the transcription of DNA into RNA using the four ribonucleoside triphosphates as substrates. In Bacillus cytotoxicus (strain DSM 22905 / CIP 110041 / 391-98 / NVH 391-98), this protein is DNA-directed RNA polymerase subunit alpha.